We begin with the raw amino-acid sequence, 145 residues long: Brain and acute leukemia cytoplasmic protein (145 aa).

Gly-2 is lipidated: N-myristoyl glycine. A lipid anchor (S-palmitoyl cysteine) is attached at Cys-3. Residues 3-35 form an interaction with CAMK2A region; that stretch reads CGGSRADAIEPRYYESWTRETESTWLTYTDSDA. 2 disordered regions span residues 36–56 and 87–109; these read LPSAAATDSGPEAGGLHAGVL and CPNSQNLSSGPLTQKQNGLWATE. The span at 87 to 105 shows a compositional bias: polar residues; sequence CPNSQNLSSGPLTQKQNGL.

In terms of assembly, interacts with CAMK2A. Palmitoylation and myristoylation target the protein to the lipid rafts. As to expression, at the mRNA level, predominantly expressed in the brain. At the protein level, mainly expressed in muscle tissues. In skeletal muscles, expressed in cranial and facial muscles, muscles of the neck, back, thoracic wall, and thigh. Also found in the contractile myoepithelial cell layer of salivary glands. In smooth muscles, expressed in the gastric wall, uterus, urinary bladder, as well as in the muscular lining around seminiferous tubules, prostatic ducts, epididymis, vas deferens, walls of small blood vessels in the dermis, and fascial layers between muscle fibers, brain, and around the spinal cord. Strongly expressed in myocardium. High expression levels are observed in placental spongiotrophoblast and adjacent myometrium. Also expressed in bone marrow hematopoietic cells. In the mature thymus, expressed in rare scattered cells. Weakly expressed in the brain neuropil, particularly near the hippocampus, and spinal cord white matter. Not detected in skin keratinocytes or lung (at protein level).

It localises to the cytoplasm. Its subcellular location is the synapse. The protein resides in the synaptosome. It is found in the membrane raft. The protein localises to the postsynaptic density. Its function is as follows. May play a synaptic role at the postsynaptic lipid rafts possibly through interaction with CAMK2A. This is Brain and acute leukemia cytoplasmic protein (Baalc) from Mus musculus (Mouse).